We begin with the raw amino-acid sequence, 919 residues long: Glutamate receptor ionotropic, kainate 3 (919 aa).

The first 31 residues, 1-31 (MTAPWRRLRSLVWEYWAGFLVCAFWIPDSRG), serve as a signal peptide directing secretion. The Extracellular portion of the chain corresponds to 32–563 (MPHVIRIGGI…VFSFLNPLSP (532 aa)). Asparagine 70, asparagine 76, asparagine 278, asparagine 381, asparagine 415, asparagine 426, and asparagine 433 each carry an N-linked (GlcNAc...) asparagine glycan. Cysteines 99 and 350 form a disulfide. Proline 518, threonine 520, and arginine 525 together coordinate L-glutamate. N-linked (GlcNAc...) asparagine glycans are attached at residues asparagine 548 and asparagine 551. Residues 564 to 584 (DIWMYVLLAYLGVSCVLFVIA) form a helical membrane-spanning segment. At 585 to 636 (RFSPYEWYDAHPCNPGSEVVENNFTLLNSFWFGMGSLMQQGSELMPKALSTR) the chain is on the cytoplasmic side. Residues 637-657 (IIGGIWWFFTLIIISSYTANL) traverse the membrane as a helical segment. The Extracellular portion of the chain corresponds to 658-820 (AAFLTVERME…KEASALGIQK (163 aa)). L-glutamate-binding residues include alanine 691, threonine 692, and glutamate 739. A glycan (N-linked (GlcNAc...) asparagine) is linked at asparagine 752. A helical transmembrane segment spans residues 821 to 841 (IGGIFIVLAAGLVLSVLVAVG). The Cytoplasmic portion of the chain corresponds to 842-919 (EFIYKLRKTA…CSTSLAPVFP (78 aa)). The residue at position 869 (serine 869) is a Phosphoserine. Lysine 887 is covalently cross-linked (Glycyl lysine isopeptide (Lys-Gly) (interchain with G-Cter in SUMO1)).

It belongs to the glutamate-gated ion channel (TC 1.A.10.1) family. GRIK3 subfamily. In terms of assembly, homotetramer, and heterotetramer with either GRIK4 or GRIK5. Can form functional heteromeric receptors with GRIK2. Interacts with PRKCABP. Interacts with NETO2. Detected in whole brain, cerebellum, brain cortex and hippocampus.

Its subcellular location is the cell membrane. It localises to the postsynaptic cell membrane. The catalysed reaction is Ca(2+)(in) = Ca(2+)(out). With respect to regulation, glutamate-gated receptor activity inhibited by spermine. In terms of biological role, ionotropic glutamate receptor that functions as a cation-permeable ligand-gated ion channel, gated by L-glutamate and the glutamatergic agonist kainic acid. Binding of the excitatory neurotransmitter L-glutamate induces a conformation change, leading to the opening of the cation channel, and thereby converts the chemical signal to an electrical impulse. The receptor then desensitizes rapidly and enters a transient inactive state, characterized by the presence of bound agonist. In association with GRIK2, involved in presynaptic facilitation of glutamate release at hippocampal mossy fiber synapses. The polypeptide is Glutamate receptor ionotropic, kainate 3 (Grik3) (Mus musculus (Mouse)).